We begin with the raw amino-acid sequence, 163 residues long: Adenosine 5'-monophosphoramidase HINT2 (163 aa).

The transit peptide at 1–17 (MAAAVLLAVGLRAARRT) directs the protein to the mitochondrion. K45 carries the N6-succinyllysine modification. The 109-residue stretch at 55–163 (IFSRILDRSL…GGRQLQWPPG (109 aa)) folds into the HIT domain. AMP contacts are provided by S63 and D80. K119 bears the N6-acetyllysine mark. N6-acetyllysine; alternate is present on K128. An N6-succinyllysine; alternate modification is found at K128. N136 contributes to the AMP binding site. The residue at position 139 (K139) is an N6-acetyllysine. Residues 142-145 (AQSV) and 149-151 (HIH) each bind AMP. Residues 147–151 (HLHIH) carry the Histidine triad motif motif. The Tele-AMP-histidine intermediate role is filled by H149.

Belongs to the HINT family.

It localises to the mitochondrion. The catalysed reaction is adenosine 5'-phosphoramidate + H2O = AMP + NH4(+). Functionally, exhibits adenosine 5'-monophosphoramidase activity, hydrolyzing purine nucleotide phosphoramidates with a single phosphate group such as adenosine 5'monophosphoramidate (AMP-NH2) to yield AMP and NH2. Hydrolyzes adenosine 5'-O-p-nitrophenylphosphoramidate (AMP-pNA). May be involved in steroid biosynthesis. May play a role in apoptosis. This chain is Adenosine 5'-monophosphoramidase HINT2, found in Mus musculus (Mouse).